The sequence spans 137 residues: Large ribosomal subunit protein uL16c (137 aa).

It belongs to the universal ribosomal protein uL16 family. In terms of assembly, part of the 50S ribosomal subunit.

The protein localises to the plastid. In Helicosporidium sp. subsp. Simulium jonesii (Green alga), this protein is Large ribosomal subunit protein uL16c (rpl16).